We begin with the raw amino-acid sequence, 344 residues long: uncharacterized protein (344 aa).

Positions 1 to 19 are cleaved as a signal peptide; sequence MRIIFYLTLLLFIFNKVKS. A propeptide spans 323 to 344 (removed in mature form); it reads SATRNQISIMVLILSVLLVLIL.

Its subcellular location is the cell membrane. This is an uncharacterized protein from Dictyostelium discoideum (Social amoeba).